The chain runs to 183 residues: Translation initiation factor IF-3 (183 aa).

This sequence belongs to the IF-3 family. In terms of assembly, monomer.

The protein localises to the cytoplasm. Functionally, IF-3 binds to the 30S ribosomal subunit and shifts the equilibrium between 70S ribosomes and their 50S and 30S subunits in favor of the free subunits, thus enhancing the availability of 30S subunits on which protein synthesis initiation begins. This is Translation initiation factor IF-3 from Azobacteroides pseudotrichonymphae genomovar. CFP2.